A 493-amino-acid chain; its full sequence is Proline--tRNA ligase (493 aa).

The protein belongs to the class-II aminoacyl-tRNA synthetase family. ProS type 3 subfamily. In terms of assembly, homodimer.

The protein localises to the cytoplasm. It catalyses the reaction tRNA(Pro) + L-proline + ATP = L-prolyl-tRNA(Pro) + AMP + diphosphate. Catalyzes the attachment of proline to tRNA(Pro) in a two-step reaction: proline is first activated by ATP to form Pro-AMP and then transferred to the acceptor end of tRNA(Pro). The polypeptide is Proline--tRNA ligase (Porphyromonas gingivalis (strain ATCC BAA-308 / W83)).